We begin with the raw amino-acid sequence, 489 residues long: Ketol-acid reductoisomerase (NADP(+)) (489 aa).

Residues 16–207 enclose the KARI N-terminal Rossmann domain; sequence IKKCRFMEKK…GGHRAGVLES (192 aa). Residues 44-47, R67, S77, and 107-109 contribute to the NADP(+) site; these read CGSQ and DKQ. The active site involves H131. G157 contacts NADP(+). KARI C-terminal knotted domains follow at residues 208–343 and 344–483; these read SFVA…QSPD and YDKK…MKNM. Residues D216, E220, E388, and E392 each contribute to the Mg(2+) site. S413 contributes to the substrate binding site.

Belongs to the ketol-acid reductoisomerase family. It depends on Mg(2+) as a cofactor.

It carries out the reaction (2R)-2,3-dihydroxy-3-methylbutanoate + NADP(+) = (2S)-2-acetolactate + NADPH + H(+). It catalyses the reaction (2R,3R)-2,3-dihydroxy-3-methylpentanoate + NADP(+) = (S)-2-ethyl-2-hydroxy-3-oxobutanoate + NADPH + H(+). It participates in amino-acid biosynthesis; L-isoleucine biosynthesis; L-isoleucine from 2-oxobutanoate: step 2/4. Its pathway is amino-acid biosynthesis; L-valine biosynthesis; L-valine from pyruvate: step 2/4. Its function is as follows. Involved in the biosynthesis of branched-chain amino acids (BCAA). Catalyzes an alkyl-migration followed by a ketol-acid reduction of (S)-2-acetolactate (S2AL) to yield (R)-2,3-dihydroxy-isovalerate. In the isomerase reaction, S2AL is rearranged via a Mg-dependent methyl migration to produce 3-hydroxy-3-methyl-2-ketobutyrate (HMKB). In the reductase reaction, this 2-ketoacid undergoes a metal-dependent reduction by NADPH to yield (R)-2,3-dihydroxy-isovalerate. The sequence is that of Ketol-acid reductoisomerase (NADP(+)) from Buchnera aphidicola subsp. Diuraphis noxia.